Here is a 328-residue protein sequence, read N- to C-terminus: Surface antigen CRP170 (328 aa).

Repeats lie at residues 38–102 and 103–167; these read NAPC…CKKC.

The protein is Surface antigen CRP170 of Giardia intestinalis (Giardia lamblia).